The chain runs to 500 residues: ATP synthase subunit alpha (500 aa).

ATP is bound at residue 169–176 (GDRQTGKT).

The protein belongs to the ATPase alpha/beta chains family. In terms of assembly, F-type ATPases have 2 components, CF(1) - the catalytic core - and CF(0) - the membrane proton channel. CF(1) has five subunits: alpha(3), beta(3), gamma(1), delta(1), epsilon(1). CF(0) has three main subunits: a(1), b(2) and c(9-12). The alpha and beta chains form an alternating ring which encloses part of the gamma chain. CF(1) is attached to CF(0) by a central stalk formed by the gamma and epsilon chains, while a peripheral stalk is formed by the delta and b chains.

Its subcellular location is the cell inner membrane. It carries out the reaction ATP + H2O + 4 H(+)(in) = ADP + phosphate + 5 H(+)(out). Functionally, produces ATP from ADP in the presence of a proton gradient across the membrane. The alpha chain is a regulatory subunit. In Fusobacterium nucleatum subsp. nucleatum (strain ATCC 25586 / DSM 15643 / BCRC 10681 / CIP 101130 / JCM 8532 / KCTC 2640 / LMG 13131 / VPI 4355), this protein is ATP synthase subunit alpha.